The sequence spans 547 residues: Inactive delta-guaiene synthase (547 aa).

Mg(2+) contacts are provided by Asp-299, Asp-303, and Asp-444. The DDXXD motif motif lies at 299 to 303; sequence DDTYD.

Belongs to the terpene synthase family. It depends on Mg(2+) as a cofactor.

The chain is Inactive delta-guaiene synthase (C1) from Aquilaria crassna (Eagle wood).